A 268-amino-acid polypeptide reads, in one-letter code: 4-hydroxy-tetrahydrodipicolinate reductase (268 aa).

9–14 (GCSGRM) serves as a coordination point for NAD(+). NADP(+) is bound at residue arginine 36. Residues 98–100 (GTT) and 122–125 (APNT) each bind NAD(+). The active-site Proton donor/acceptor is histidine 155. Histidine 156 is a (S)-2,3,4,5-tetrahydrodipicolinate binding site. The Proton donor role is filled by lysine 159. 165 to 166 (GT) contributes to the (S)-2,3,4,5-tetrahydrodipicolinate binding site.

Belongs to the DapB family.

Its subcellular location is the cytoplasm. The enzyme catalyses (S)-2,3,4,5-tetrahydrodipicolinate + NAD(+) + H2O = (2S,4S)-4-hydroxy-2,3,4,5-tetrahydrodipicolinate + NADH + H(+). It carries out the reaction (S)-2,3,4,5-tetrahydrodipicolinate + NADP(+) + H2O = (2S,4S)-4-hydroxy-2,3,4,5-tetrahydrodipicolinate + NADPH + H(+). It participates in amino-acid biosynthesis; L-lysine biosynthesis via DAP pathway; (S)-tetrahydrodipicolinate from L-aspartate: step 4/4. Functionally, catalyzes the conversion of 4-hydroxy-tetrahydrodipicolinate (HTPA) to tetrahydrodipicolinate. The protein is 4-hydroxy-tetrahydrodipicolinate reductase of Colwellia psychrerythraea (strain 34H / ATCC BAA-681) (Vibrio psychroerythus).